The sequence spans 197 residues: Peptide deformylase (197 aa).

Positions 106 and 148 each coordinate Fe cation. The active site involves glutamate 149. Histidine 152 lines the Fe cation pocket.

This sequence belongs to the polypeptide deformylase family. Requires Fe(2+) as cofactor.

It carries out the reaction N-terminal N-formyl-L-methionyl-[peptide] + H2O = N-terminal L-methionyl-[peptide] + formate. Its function is as follows. Removes the formyl group from the N-terminal Met of newly synthesized proteins. Requires at least a dipeptide for an efficient rate of reaction. N-terminal L-methionine is a prerequisite for activity but the enzyme has broad specificity at other positions. This chain is Peptide deformylase, found in Mycobacterium tuberculosis (strain ATCC 25177 / H37Ra).